We begin with the raw amino-acid sequence, 187 residues long: CASP-like protein 2 (187 aa).

At 1 to 24 (MKVSAVETGEISQVSAPRKGMIRG) the chain is on the cytoplasmic side. The chain crosses the membrane as a helical span at residues 25 to 45 (LSIMDFILRIVAAIGTLGSAL). At 46-72 (STGTTRETLPFTTQFVKFRAVFDDLPT) the chain is on the extracellular side. Residues 73-93 (FVFFVTSNSIVCGYLVLSLAL) form a helical membrane-spanning segment. Over 94–108 (SFFHIIRRSSAAKSR) the chain is Cytoplasmic. A helical transmembrane segment spans residues 109 to 129 (ILLVFLDTVMFGLLTTGAAAA). Over 130-163 (GTIVYVSHYGNVNANWFPFCGQYNHFCERISGSL) the chain is Extracellular. The helical transmembrane segment at 164–184 (IGSFIAVVIFMIIILMSAVSI) threads the bilayer. The Cytoplasmic segment spans residues 185-187 (SKH).

This sequence belongs to the Casparian strip membrane proteins (CASP) family. As to quaternary structure, homodimer and heterodimers.

It localises to the cell membrane. The polypeptide is CASP-like protein 2 (Lotus japonicus (Lotus corniculatus var. japonicus)).